Consider the following 201-residue polypeptide: uncharacterized protein (201 aa).

Positions 1–19 (MKLIVSVFLIGCQFLNILG) are cleaved as a signal peptide.

This is an uncharacterized protein from Acheta domesticus (House cricket).